Consider the following 939-residue polypeptide: AP-2 complex subunit alpha (939 aa).

Residues Arg-623 to Lys-633 are compositionally biased toward basic and acidic residues. The tract at residues Arg-623 to Asn-660 is disordered. Residues Pro-635–Asn-660 show a composition bias toward polar residues.

It belongs to the adapter complexes large subunit family. In terms of assembly, adaptor protein complex 2 (AP-2) is a heterotetramer composed of two large adaptins (alpha-type and beta-type subunits), a medium adaptin (mu-type subunit AP50) and a small adaptin (sigma-type subunit AP17).

Its subcellular location is the cell membrane. It is found in the membrane. It localises to the coated pit. Its function is as follows. Adaptins are components of the adapter complexes which link clathrin to receptors in coated vesicles. Clathrin-associated protein complexes are believed to interact with the cytoplasmic tails of membrane proteins, leading to their selection and concentration. Alpha adaptin is a subunit of the plasma membrane adapter. The sequence is that of AP-2 complex subunit alpha from Drosophila pseudoobscura pseudoobscura (Fruit fly).